A 281-amino-acid polypeptide reads, in one-letter code: 16S rRNA (guanine(1405)-N(7))-methyltransferase (281 aa).

S-adenosyl-L-methionine is bound by residues Tyr-60, 105–107 (HTS), Arg-111, Gly-136, Asp-160, 186–187 (QG), Phe-203, and Gln-212.

The protein belongs to the methyltransferase superfamily. Aminoglycoside resistance family.

The catalysed reaction is guanosine(1405) in 16S rRNA + S-adenosyl-L-methionine = N(7)-methylguanosine(1405) in 16S rRNA + S-adenosyl-L-homocysteine. Functionally, specifically methylates the N(7) position of guanine 1405 in 16S rRNA. Confers resistance to various aminoglycosides, including gentamicin and kanamycin. The sequence is that of 16S rRNA (guanine(1405)-N(7))-methyltransferase (rmtC) from Proteus mirabilis.